A 202-amino-acid chain; its full sequence is Ribonuclease HII (202 aa).

One can recognise an RNase H type-2 domain in the interval 13 to 202 (KIEAGLDEAG…HFKPKQLDLF (190 aa)). A divalent metal cation is bound by residues aspartate 19, glutamate 20, and aspartate 112.

It belongs to the RNase HII family. It depends on Mn(2+) as a cofactor. Mg(2+) serves as cofactor.

It localises to the cytoplasm. It catalyses the reaction Endonucleolytic cleavage to 5'-phosphomonoester.. Functionally, endonuclease that specifically degrades the RNA of RNA-DNA hybrids. This is Ribonuclease HII from Cytophaga hutchinsonii (strain ATCC 33406 / DSM 1761 / CIP 103989 / NBRC 15051 / NCIMB 9469 / D465).